Consider the following 301-residue polypeptide: Ribonuclease HIII (301 aa).

Positions 90–301 constitute an RNase H type-2 domain; it reads TPHIGIDESG…LDAILGKVGK (212 aa). A divalent metal cation-binding residues include Asp96, Glu97, and Asp198.

The protein belongs to the RNase HII family. RnhC subfamily. It depends on Mn(2+) as a cofactor. Requires Mg(2+) as cofactor.

It localises to the cytoplasm. The enzyme catalyses Endonucleolytic cleavage to 5'-phosphomonoester.. Its function is as follows. Endonuclease that specifically degrades the RNA of RNA-DNA hybrids. The chain is Ribonuclease HIII from Protochlamydia amoebophila (strain UWE25).